The primary structure comprises 149 residues: Arginine repressor (149 aa).

This sequence belongs to the ArgR family.

Its subcellular location is the cytoplasm. Its pathway is amino-acid biosynthesis; L-arginine biosynthesis [regulation]. In terms of biological role, regulates arginine biosynthesis genes. The polypeptide is Arginine repressor (Shouchella clausii (strain KSM-K16) (Alkalihalobacillus clausii)).